The following is a 139-amino-acid chain: D-ribose pyranase (139 aa).

Histidine 20 functions as the Proton donor in the catalytic mechanism. Residues aspartate 28, histidine 106, and 128–130 contribute to the substrate site; that span reads YAN.

Belongs to the RbsD / FucU family. RbsD subfamily. As to quaternary structure, homodecamer.

It localises to the cytoplasm. It catalyses the reaction beta-D-ribopyranose = beta-D-ribofuranose. Its pathway is carbohydrate metabolism; D-ribose degradation; D-ribose 5-phosphate from beta-D-ribopyranose: step 1/2. Functionally, catalyzes the interconversion of beta-pyran and beta-furan forms of D-ribose. In Escherichia coli O81 (strain ED1a), this protein is D-ribose pyranase.